The following is a 251-amino-acid chain: tRNA-uridine aminocarboxypropyltransferase 2 (251 aa).

Residues C23, C26, C33, and C35 each coordinate Zn(2+). The DXTW motif lies at 131-134 (DGTW).

The protein belongs to the TDD superfamily. DTWD2 family.

It carries out the reaction a uridine in tRNA + S-adenosyl-L-methionine = a 3-[(3S)-3-amino-3-carboxypropyl]uridine in tRNA + S-methyl-5'-thioadenosine + H(+). Catalyzes the formation of 3-(3-amino-3-carboxypropyl)uridine (acp3U) at position 20a in the D-loop of several cytoplasmic tRNAs (acp3U(20a)). The protein is tRNA-uridine aminocarboxypropyltransferase 2 of Drosophila melanogaster (Fruit fly).